The chain runs to 523 residues: Solute carrier family 35 member F5 (523 aa).

The next 2 membrane-spanning stretches (helical) occupy residues 69–89 and 101–121; these read MALG…SSEL and FFST…FIIW. Ser207 is modified (phosphoserine). The next 8 helical transmembrane spans lie at 243–263, 268–288, 296–316, 327–347, 361–381, 395–415, 420–440, and 452–472; these read ISFF…EALS, AIVN…AAVF, FTLS…LVNL, TIGS…IVMI, MFFG…FFLL, VVLM…EFLW, FLTS…LSII, and WLFF…TLLC. Positions 252–316 constitute an EamA domain; sequence FLANLSYQEA…SIGGVVLVNL (65 aa).

It belongs to the SLC35F solute transporter family.

The protein localises to the membrane. Functionally, putative solute transporter. The protein is Solute carrier family 35 member F5 (SLC35F5) of Pongo abelii (Sumatran orangutan).